We begin with the raw amino-acid sequence, 82 residues long: Sulfur carrier protein TusA (82 aa).

The active-site Cysteine persulfide intermediate is the Cys-20.

This sequence belongs to the sulfur carrier protein TusA family.

It localises to the cytoplasm. Sulfur carrier protein which probably makes part of a sulfur-relay system. The polypeptide is Sulfur carrier protein TusA (Aeromonas hydrophila subsp. hydrophila (strain ATCC 7966 / DSM 30187 / BCRC 13018 / CCUG 14551 / JCM 1027 / KCTC 2358 / NCIMB 9240 / NCTC 8049)).